The following is a 58-amino-acid chain: MNKLKITQIKSSIGCLKKHKSTLYGLGLRHIGHTVIRQNSPRLLGMINSISYLVKIKD.

It belongs to the universal ribosomal protein uL30 family. As to quaternary structure, part of the 50S ribosomal subunit.

In Wigglesworthia glossinidia brevipalpis, this protein is Large ribosomal subunit protein uL30.